The following is a 265-amino-acid chain: 3-methyl-2-oxobutanoate hydroxymethyltransferase (265 aa).

Positions 45 and 84 each coordinate Mg(2+). 3-methyl-2-oxobutanoate contacts are provided by residues 45–46 (DS), aspartate 84, and lysine 112. Glutamate 114 contributes to the Mg(2+) binding site. Glutamate 181 functions as the Proton acceptor in the catalytic mechanism.

It belongs to the PanB family. In terms of assembly, homodecamer; pentamer of dimers. The cofactor is Mg(2+).

The protein localises to the cytoplasm. The enzyme catalyses 3-methyl-2-oxobutanoate + (6R)-5,10-methylene-5,6,7,8-tetrahydrofolate + H2O = 2-dehydropantoate + (6S)-5,6,7,8-tetrahydrofolate. The protein operates within cofactor biosynthesis; (R)-pantothenate biosynthesis; (R)-pantoate from 3-methyl-2-oxobutanoate: step 1/2. Its function is as follows. Catalyzes the reversible reaction in which hydroxymethyl group from 5,10-methylenetetrahydrofolate is transferred onto alpha-ketoisovalerate to form ketopantoate. The chain is 3-methyl-2-oxobutanoate hydroxymethyltransferase from Yersinia pseudotuberculosis serotype IB (strain PB1/+).